A 145-amino-acid polypeptide reads, in one-letter code: UPF0201 protein STK_09490 (145 aa).

It belongs to the UPF0201 family.

This is UPF0201 protein STK_09490 from Sulfurisphaera tokodaii (strain DSM 16993 / JCM 10545 / NBRC 100140 / 7) (Sulfolobus tokodaii).